A 493-amino-acid polypeptide reads, in one-letter code: Cysteine--tRNA ligase (493 aa).

C29 lines the Zn(2+) pocket. The 'HIGH' region signature appears at 31-41 (PTVYDFAHIGN). 3 residues coordinate Zn(2+): C227, H252, and E256. The short motif at 285–289 (KMSKS) is the 'KMSKS' region element. K288 lines the ATP pocket.

This sequence belongs to the class-I aminoacyl-tRNA synthetase family. As to quaternary structure, monomer. Zn(2+) serves as cofactor.

It localises to the cytoplasm. The catalysed reaction is tRNA(Cys) + L-cysteine + ATP = L-cysteinyl-tRNA(Cys) + AMP + diphosphate. This Rhodopseudomonas palustris (strain HaA2) protein is Cysteine--tRNA ligase.